The primary structure comprises 572 residues: Urease subunit alpha (572 aa).

The region spanning 136–572 is the Urease domain; sequence GGIDTHIHWI…VPLAQRYFLF (437 aa). Histidine 141, histidine 143, and lysine 224 together coordinate Ni(2+). Residue lysine 224 is modified to N6-carboxylysine. Histidine 226 is a binding site for substrate. Histidine 253 and histidine 279 together coordinate Ni(2+). Histidine 327 acts as the Proton donor in catalysis. Ni(2+) is bound at residue aspartate 367.

This sequence belongs to the metallo-dependent hydrolases superfamily. Urease alpha subunit family. In terms of assembly, heterotrimer of UreA (gamma), UreB (beta) and UreC (alpha) subunits. Three heterotrimers associate to form the active enzyme. Requires Ni cation as cofactor. In terms of processing, carboxylation allows a single lysine to coordinate two nickel ions.

It localises to the cytoplasm. It carries out the reaction urea + 2 H2O + H(+) = hydrogencarbonate + 2 NH4(+). The protein operates within nitrogen metabolism; urea degradation; CO(2) and NH(3) from urea (urease route): step 1/1. This chain is Urease subunit alpha, found in Actinobacillus pleuropneumoniae serotype 5b (strain L20).